We begin with the raw amino-acid sequence, 204 residues long: Large ribosomal subunit protein eL15 (204 aa).

2 disordered regions span residues 71–91 (RKRP…GVNQ) and 159–182 (REMR…HYSQ). Residues 159-174 (REMRGKTSAGRKHRGL) show a composition bias toward basic residues.

Belongs to the eukaryotic ribosomal protein eL15 family.

The polypeptide is Large ribosomal subunit protein eL15 (RPL15) (Faxonius limosus (Spinycheek crayfish)).